Here is a 485-residue protein sequence, read N- to C-terminus: Glutamyl-tRNA(Gln) amidotransferase subunit A (485 aa).

Residues K79 and S154 each act as charge relay system in the active site. Catalysis depends on S178, which acts as the Acyl-ester intermediate.

This sequence belongs to the amidase family. GatA subfamily. In terms of assembly, heterotrimer of A, B and C subunits.

The enzyme catalyses L-glutamyl-tRNA(Gln) + L-glutamine + ATP + H2O = L-glutaminyl-tRNA(Gln) + L-glutamate + ADP + phosphate + H(+). In terms of biological role, allows the formation of correctly charged Gln-tRNA(Gln) through the transamidation of misacylated Glu-tRNA(Gln) in organisms which lack glutaminyl-tRNA synthetase. The reaction takes place in the presence of glutamine and ATP through an activated gamma-phospho-Glu-tRNA(Gln). This chain is Glutamyl-tRNA(Gln) amidotransferase subunit A, found in Staphylococcus aureus (strain Mu3 / ATCC 700698).